The chain runs to 678 residues: Catalase (678 aa).

Residues 1–26 (MSNEREMQNKKDQQLESFRVEDEGKK) are compositionally biased toward basic and acidic residues. The disordered stretch occupies residues 1-32 (MSNEREMQNKKDQQLESFRVEDEGKKLTTNQG). Catalysis depends on residues His-75 and Asn-148. Tyr-362 provides a ligand contact to heme.

The protein belongs to the catalase family. HPII subfamily. Requires heme as cofactor.

It is found in the cytoplasm. The catalysed reaction is 2 H2O2 = O2 + 2 H2O. Decomposes hydrogen peroxide into water and oxygen; serves to protect cells from the toxic effects of hydrogen peroxide. This Alkalihalophilus pseudofirmus (strain ATCC BAA-2126 / JCM 17055 / OF4) (Bacillus pseudofirmus) protein is Catalase (katE).